Consider the following 1124-residue polypeptide: SH3 and PX domain-containing protein 2A (1124 aa).

Residues 4–128 (YCVQDATVVD…RFFEARPEDV (125 aa)) enclose the PX domain. Positions 166-225 (MILEQYVVVSNYKKQENSELSLQAGEVVDVIEKNESGWWFVSTSEEQGWVPATYLEAQNG) constitute an SH3 1 domain. T256 bears the Phosphothreonine mark. Residues 266–325 (SREEKYVTVQPYTSQSKDEIGFEKGVTVEVIRKNLEGWWYIRYLGKEGWAPASYLKKAKD) enclose the SH3 2 domain. S405 and S420 each carry phosphoserine. Disordered regions lie at residues 414–443 (QRAQ…PKPP), 504–672 (RKKP…KLKA), 692–830 (SVTI…PKKE), and 886–952 (YLVA…GKTS). The 60-residue stretch at 447 to 506 (SVEVEYYTIAEFQSCISDGISFRGGQKAEVIDKNSGGWWYVQIGEKEGWAPASYIDKRKK) folds into the SH3 3 domain. Phosphoserine is present on residues S546 and S566. Basic and acidic residues predominate over residues 575–585 (SGDRGSGDKHP). S592 carries the phosphoserine modification. A compositionally biased stretch (acidic residues) spans 607 to 619 (SSEDVALEEETIY). Composition is skewed to low complexity over residues 633-669 (SARG…SLLK) and 692-709 (SVTI…SSLS). Phosphoserine is present on S643. Residues 713 to 739 (GDLKPRSASDAGIRDTPKVGTKKDPDV) are compositionally biased toward basic and acidic residues. Phosphothreonine is present on T728. A phosphoserine mark is found at S764, S766, and S812. At T822 the chain carries Phosphothreonine. One can recognise an SH3 4 domain in the interval 833–892 (GQGATYVTCSAYQKVQDSEISFPEGAEVHVLEKAESGWWYVRFGELEGWAPSHYLVAEEN). Positions 907–937 (SSQNEGKSDSLEKIEKRVQALNTVNQSKRAT) form a coiled coil. Residues 912-924 (GKSDSLEKIEKRV) are compositionally biased toward basic and acidic residues. The segment covering 926 to 935 (ALNTVNQSKR) has biased composition (polar residues). Phosphoserine occurs at positions 993, 1007, 1008, and 1029. Residues 1020 to 1050 (KGRLAERAASQGSESPLLPTQRKGIPVSPVR) form a disordered region. Residues 1063-1124 (NLKDVYISIA…VPSNYLEKKN (62 aa)) enclose the SH3 5 domain.

It belongs to the SH3PXD2 family. Interacts with ADAM12, ADAM15 and ADAM19. Interacts with NOXO1. Interacts (via SH3 domains) with NOXA1; the interaction is direct. Interacts (via N-terminus) with CYBA. Interacts with FASLG. Interacts (via PX domain) with RAB40B (GTP-bound); interaction promotes invadopodia-mediated extracellular matrix degradation. Tyrosine phosphorylated by SRC. Phosphorylation plays a regulatory role in the protein localization. The intramolecular interaction of the PX domain with the third SH3 domain maintains the protein in the cytoplasm and phosphorylation disrupts this interaction, resulting in the redistribution of the protein from cytoplasm to the perimembrane region. Phosphorylated on serine upon DNA damage, probably by ATM or ATR. In terms of tissue distribution, widely expressed. Not found in the spleen and testis.

It localises to the cytoplasm. The protein localises to the cell projection. Its subcellular location is the podosome. Adapter protein involved in invadopodia and podosome formation, extracellular matrix degradation and invasiveness of some cancer cells. Binds matrix metalloproteinases (ADAMs), NADPH oxidases (NOXs) and phosphoinositides. Acts as an organizer protein that allows NOX1- or NOX3-dependent reactive oxygen species (ROS) generation and ROS localization. In association with ADAM12, mediates the neurotoxic effect of amyloid-beta peptide. This chain is SH3 and PX domain-containing protein 2A, found in Mus musculus (Mouse).